Here is a 470-residue protein sequence, read N- to C-terminus: Argininosuccinate lyase (470 aa).

This sequence belongs to the lyase 1 family. Argininosuccinate lyase subfamily.

The protein resides in the cytoplasm. The catalysed reaction is 2-(N(omega)-L-arginino)succinate = fumarate + L-arginine. It participates in amino-acid biosynthesis; L-arginine biosynthesis; L-arginine from L-ornithine and carbamoyl phosphate: step 3/3. The sequence is that of Argininosuccinate lyase from Bordetella avium (strain 197N).